The following is a 421-amino-acid chain: CinA-like protein (421 aa).

The protein belongs to the CinA family.

In Synechococcus elongatus (strain ATCC 33912 / PCC 7942 / FACHB-805) (Anacystis nidulans R2), this protein is CinA-like protein.